Here is a 293-residue protein sequence, read N- to C-terminus: tRNA-cytidine(32) 2-sulfurtransferase (293 aa).

The PP-loop motif motif lies at 71-76 (SGGKDS). The [4Fe-4S] cluster site is built by cysteine 146, cysteine 149, and cysteine 237.

It belongs to the TtcA family. As to quaternary structure, homodimer. The cofactor is Mg(2+). [4Fe-4S] cluster serves as cofactor.

The protein resides in the cytoplasm. The enzyme catalyses cytidine(32) in tRNA + S-sulfanyl-L-cysteinyl-[cysteine desulfurase] + AH2 + ATP = 2-thiocytidine(32) in tRNA + L-cysteinyl-[cysteine desulfurase] + A + AMP + diphosphate + H(+). The protein operates within tRNA modification. Its function is as follows. Catalyzes the ATP-dependent 2-thiolation of cytidine in position 32 of tRNA, to form 2-thiocytidine (s(2)C32). The sulfur atoms are provided by the cysteine/cysteine desulfurase (IscS) system. This Sinorhizobium medicae (strain WSM419) (Ensifer medicae) protein is tRNA-cytidine(32) 2-sulfurtransferase.